Here is a 457-residue protein sequence, read N- to C-terminus: Carboxypeptidase N catalytic chain (457 aa).

An N-terminal signal peptide occupies residues 1–23 (MPDLPSAFLPLLLLSKFVTPVTF). A Peptidase M14 domain is found at 24–338 (RHHRYDDLVR…EALIQFLEQV (315 aa)). A disulfide bridge connects residues Cys-42 and Cys-104. Residues His-86, Glu-89, and His-216 each contribute to the Zn(2+) site. An intrachain disulfide couples Cys-271 to Cys-311. Glu-308 serves as the catalytic Proton donor/acceptor. O-linked (GalNAc...) threonine glycans are attached at residues Thr-400, Thr-402, and Thr-409. Positions 418 to 457 (SSSQVYPVQRAPGRGQGGRAKQPRTSRKKDPATKRHRGPA) are disordered.

It belongs to the peptidase M14 family. In terms of assembly, tetramer of two catalytic chains and two glycosylated inactive chains. Zn(2+) is required as a cofactor. In terms of tissue distribution, mainly expressed in liver. Also detected in lung, stomach, intestine, spleen and kidney.

It localises to the secreted. The protein resides in the extracellular space. The catalysed reaction is Release of a C-terminal basic amino acid, preferentially lysine.. Protects the body from potent vasoactive and inflammatory peptides containing C-terminal Arg or Lys (such as kinins or anaphylatoxins) which are released into the circulation. The chain is Carboxypeptidase N catalytic chain (Cpn1) from Mus musculus (Mouse).